A 206-amino-acid polypeptide reads, in one-letter code: Ribosomal RNA small subunit methyltransferase G (206 aa).

Residues glycine 73, leucine 78, 124 to 125 (VE), and arginine 139 contribute to the S-adenosyl-L-methionine site.

The protein belongs to the methyltransferase superfamily. RNA methyltransferase RsmG family.

The protein localises to the cytoplasm. The enzyme catalyses guanosine(527) in 16S rRNA + S-adenosyl-L-methionine = N(7)-methylguanosine(527) in 16S rRNA + S-adenosyl-L-homocysteine. Functionally, specifically methylates the N7 position of guanine in position 527 of 16S rRNA. The chain is Ribosomal RNA small subunit methyltransferase G from Sodalis glossinidius (strain morsitans).